The following is a 376-amino-acid chain: Carbamoyl phosphate synthase small chain (376 aa).

Residues methionine 1–glutamate 184 are CPSase. Residues serine 45, glycine 236, and glycine 238 each contribute to the L-glutamine site. In terms of domain architecture, Glutamine amidotransferase type-1 spans lysine 188–serine 374. Cysteine 263 serves as the catalytic Nucleophile. The L-glutamine site is built by leucine 264, glutamine 267, asparagine 305, glycine 307, and phenylalanine 308. Catalysis depends on residues histidine 347 and glutamate 349.

This sequence belongs to the CarA family. As to quaternary structure, composed of two chains; the small (or glutamine) chain promotes the hydrolysis of glutamine to ammonia, which is used by the large (or ammonia) chain to synthesize carbamoyl phosphate. Tetramer of heterodimers (alpha,beta)4.

It catalyses the reaction hydrogencarbonate + L-glutamine + 2 ATP + H2O = carbamoyl phosphate + L-glutamate + 2 ADP + phosphate + 2 H(+). The catalysed reaction is L-glutamine + H2O = L-glutamate + NH4(+). Its pathway is amino-acid biosynthesis; L-arginine biosynthesis; carbamoyl phosphate from bicarbonate: step 1/1. It participates in pyrimidine metabolism; UMP biosynthesis via de novo pathway; (S)-dihydroorotate from bicarbonate: step 1/3. Its function is as follows. Small subunit of the glutamine-dependent carbamoyl phosphate synthetase (CPSase). CPSase catalyzes the formation of carbamoyl phosphate from the ammonia moiety of glutamine, carbonate, and phosphate donated by ATP, constituting the first step of 2 biosynthetic pathways, one leading to arginine and/or urea and the other to pyrimidine nucleotides. The small subunit (glutamine amidotransferase) binds and cleaves glutamine to supply the large subunit with the substrate ammonia. This Syntrophotalea carbinolica (strain DSM 2380 / NBRC 103641 / GraBd1) (Pelobacter carbinolicus) protein is Carbamoyl phosphate synthase small chain.